Reading from the N-terminus, the 527-residue chain is Berberine bridge enzyme-like 8 (527 aa).

Positions M1 to S20 are cleaved as a signal peptide. A disulfide bridge connects residues C31 and C93. 2 N-linked (GlcNAc...) asparagine glycosylation sites follow: N51 and N68. The FAD-binding PCMH-type domain maps to S71–V247. Positions H108–C172 form a cross-link, 6-(S-cysteinyl)-8alpha-(pros-histidyl)-FAD (His-Cys). N-linked (GlcNAc...) asparagine glycans are attached at residues N250, N263, and N292.

Belongs to the oxygen-dependent FAD-linked oxidoreductase family. The cofactor is FAD. The FAD cofactor is bound via a bicovalent 6-S-cysteinyl, 8alpha-N1-histidyl FAD linkage.

Its subcellular location is the secreted. It localises to the cell wall. The polypeptide is Berberine bridge enzyme-like 8 (Arabidopsis thaliana (Mouse-ear cress)).